A 116-amino-acid chain; its full sequence is MYCQRLALPLTRSLLASRAPLALRMENAVAARMISTTVARKDIDSAAKYIGAGAATVGVAGSGAGIGNVFGALVIGYARNPSLKQQLFSYAILGFALSEAMGLFCLTMGFMILFAL.

A mitochondrion-targeting transit peptide spans 1 to 24 (MYCQRLALPLTRSLLASRAPLALR). Residues 57 to 77 (VGVAGSGAGIGNVFGALVIGY) traverse the membrane as a helical segment. N6,N6,N6-trimethyllysine is present on Lys84. Residues 92–112 (ILGFALSEAMGLFCLTMGFMI) traverse the membrane as a helical segment.

This sequence belongs to the ATPase C chain family. F-type ATPases have 2 components, CF(1) - the catalytic core - and CF(0) - the membrane proton channel. CF(1) has five subunits: alpha(3), beta(3), gamma(1), delta(1), epsilon(1). CF(0) has three main subunits: a, b and c. In terms of processing, trimethylated by ATPSCKMT at Lys-84. Methylation may be required for proper incorporation of the C subunit into the ATP synthase complex and mitochondrial respiration.

Its subcellular location is the mitochondrion membrane. Its function is as follows. Mitochondrial membrane ATP synthase (F(1)F(0) ATP synthase or Complex V) produces ATP from ADP in the presence of a proton gradient across the membrane which is generated by electron transport complexes of the respiratory chain. F-type ATPases consist of two structural domains, F(1) - containing the extramembraneous catalytic core and F(0) - containing the membrane proton channel, linked together by a central stalk and a peripheral stalk. During catalysis, ATP synthesis in the catalytic domain of F(1) is coupled via a rotary mechanism of the central stalk subunits to proton translocation. Part of the complex F(0) domain. A homomeric c-ring of probably 10 subunits is part of the complex rotary element. The chain is ATP synthase lipid-binding protein, mitochondrial from Caenorhabditis briggsae.